A 517-amino-acid polypeptide reads, in one-letter code: GMP synthase [glutamine-hydrolyzing] (517 aa).

One can recognise a Glutamine amidotransferase type-1 domain in the interval 9 to 199 (RILILDFGSQ…VLGICGCERL (191 aa)). The active-site Nucleophile is Cys86. Catalysis depends on residues His173 and Glu175. Residues 200-392 (WTSESIIEDA…LGLPYEMLYR (193 aa)) form the GMPS ATP-PPase domain. 227 to 233 (SGGVDSS) lines the ATP pocket.

In terms of assembly, homodimer.

The enzyme catalyses XMP + L-glutamine + ATP + H2O = GMP + L-glutamate + AMP + diphosphate + 2 H(+). It functions in the pathway purine metabolism; GMP biosynthesis; GMP from XMP (L-Gln route): step 1/1. Its function is as follows. Catalyzes the synthesis of GMP from XMP. The chain is GMP synthase [glutamine-hydrolyzing] from Vibrio vulnificus (strain CMCP6).